Here is a 325-residue protein sequence, read N- to C-terminus: tRNA(Ile)-lysidine synthase (325 aa).

Position 35–40 (35–40 (SGGQDS)) interacts with ATP.

The protein belongs to the tRNA(Ile)-lysidine synthase family.

The protein localises to the cytoplasm. The enzyme catalyses cytidine(34) in tRNA(Ile2) + L-lysine + ATP = lysidine(34) in tRNA(Ile2) + AMP + diphosphate + H(+). Ligates lysine onto the cytidine present at position 34 of the AUA codon-specific tRNA(Ile) that contains the anticodon CAU, in an ATP-dependent manner. Cytidine is converted to lysidine, thus changing the amino acid specificity of the tRNA from methionine to isoleucine. The protein is tRNA(Ile)-lysidine synthase of Gloeobacter violaceus (strain ATCC 29082 / PCC 7421).